A 332-amino-acid chain; its full sequence is Lipoyl synthase (332 aa).

Positions 74, 79, 85, 100, 104, 107, and 314 each coordinate [4Fe-4S] cluster. In terms of domain architecture, Radical SAM core spans cysteine 85 to serine 303.

Belongs to the radical SAM superfamily. Lipoyl synthase family. The cofactor is [4Fe-4S] cluster.

The protein resides in the cytoplasm. It catalyses the reaction [[Fe-S] cluster scaffold protein carrying a second [4Fe-4S](2+) cluster] + N(6)-octanoyl-L-lysyl-[protein] + 2 oxidized [2Fe-2S]-[ferredoxin] + 2 S-adenosyl-L-methionine + 4 H(+) = [[Fe-S] cluster scaffold protein] + N(6)-[(R)-dihydrolipoyl]-L-lysyl-[protein] + 4 Fe(3+) + 2 hydrogen sulfide + 2 5'-deoxyadenosine + 2 L-methionine + 2 reduced [2Fe-2S]-[ferredoxin]. It participates in protein modification; protein lipoylation via endogenous pathway; protein N(6)-(lipoyl)lysine from octanoyl-[acyl-carrier-protein]: step 2/2. Its function is as follows. Catalyzes the radical-mediated insertion of two sulfur atoms into the C-6 and C-8 positions of the octanoyl moiety bound to the lipoyl domains of lipoate-dependent enzymes, thereby converting the octanoylated domains into lipoylated derivatives. The polypeptide is Lipoyl synthase (Polaromonas naphthalenivorans (strain CJ2)).